The chain runs to 2197 residues: uncharacterized protein (2197 aa).

An N-acetylserine modification is found at serine 2. The HEAT repeat unit spans residues threonine 2159–glutamate 2195.

It belongs to the HEATR1/UTP10 family.

It is found in the nucleus. Its subcellular location is the nucleolus. Involved in nucleolar processing of pre-18S ribosomal RNA. Involved in ribosome biosynthesis. This is an uncharacterized protein from Arabidopsis thaliana (Mouse-ear cress).